A 75-amino-acid polypeptide reads, in one-letter code: Dermaseptin-S11 (75 aa).

The N-terminal stretch at 1–22 is a signal peptide; it reads MAFLKKSLFLVLFLGMVSLSIC. Positions 23 to 45 are excised as a propeptide; sequence EEEKRENEDEEEQEDDEQSEEKR. The tract at residues 25–44 is disordered; the sequence is EKRENEDEEEQEDDEQSEEK. Acidic residues predominate over residues 30 to 41; sequence EDEEEQEDDEQS.

The protein belongs to the frog skin active peptide (FSAP) family. Dermaseptin subfamily. Expressed by the skin glands.

Its subcellular location is the secreted. It localises to the target cell membrane. Functionally, antimicrobial peptide with activity against Gram-positive and Gram-negative bacteria, and fungi. Has hemolytic activity. In Phyllomedusa sauvagei (Sauvage's leaf frog), this protein is Dermaseptin-S11.